Reading from the N-terminus, the 142-residue chain is Large ribosomal subunit protein uL22c (142 aa).

The protein belongs to the universal ribosomal protein uL22 family. As to quaternary structure, part of the 50S ribosomal subunit.

The protein resides in the plastid. The protein localises to the chloroplast. This protein binds specifically to 23S rRNA. In terms of biological role, the globular domain of the protein is located near the polypeptide exit tunnel on the outside of the subunit, while an extended beta-hairpin is found that lines the wall of the exit tunnel in the center of the 70S ribosome. This is Large ribosomal subunit protein uL22c (rpl22) from Carica papaya (Papaya).